The sequence spans 97 residues: MSTEYGIALGMIETRGLVPAIEAADAMTKAAEVRLVSREFVGGGYVTVLVRGETGAVNAAVRAGADACERVGDGLVAAHIIARPHKEVEPVLTMEKK.

The BMC domain occupies 8-93 (ALGMIETRGL…PHKEVEPVLT (86 aa)).

It belongs to the bacterial microcompartments protein family. CsoS1 subfamily. As to quaternary structure, homohexamer with a small central pore.

The protein localises to the carboxysome. Its function is as follows. One of shell proteins of the carboxysome, a polyhedral inclusion where RuBisCO (ribulose bisphosphate carboxylase, ccbL-ccbS) is sequestered. Assembles into hexamers which make sheets that form the facets of the polyhedral carboxysome. The shell probably limits the diffusion of CO(2) into and out of the carboxysome. This chain is Carboxysome shell protein CsoS1B, found in Hydrogenovibrio crunogenus (strain DSM 25203 / XCL-2) (Thiomicrospira crunogena).